The sequence spans 294 residues: Glyceraldehyde-3-phosphate dehydrogenase (294 aa).

Residues D19, R63, and T105 each coordinate NAD(+). D-glyceraldehyde 3-phosphate contacts are provided by residues S134–T136 and T165. Catalysis depends on C135, which acts as the Nucleophile. Positions K169–N188 are disordered. Residues T194 to G195 and R217 contribute to the D-glyceraldehyde 3-phosphate site.

This sequence belongs to the glyceraldehyde-3-phosphate dehydrogenase family. In terms of assembly, homotetramer.

The protein localises to the cytoplasm. It catalyses the reaction D-glyceraldehyde 3-phosphate + phosphate + NAD(+) = (2R)-3-phospho-glyceroyl phosphate + NADH + H(+). It functions in the pathway carbohydrate degradation; glycolysis; pyruvate from D-glyceraldehyde 3-phosphate: step 1/5. Catalyzes the oxidative phosphorylation of glyceraldehyde 3-phosphate (G3P) to 1,3-bisphosphoglycerate (BPG) using the cofactor NAD. The first reaction step involves the formation of a hemiacetal intermediate between G3P and a cysteine residue, and this hemiacetal intermediate is then oxidized to a thioester, with concomitant reduction of NAD to NADH. The reduced NADH is then exchanged with the second NAD, and the thioester is attacked by a nucleophilic inorganic phosphate to produce BPG. The protein is Glyceraldehyde-3-phosphate dehydrogenase (gap) of Citrobacter freundii.